Reading from the N-terminus, the 680-residue chain is DNA-directed RNA polymerase subunit beta' (680 aa).

Positions 69, 71, 87, and 90 each coordinate Zn(2+). Asp489, Asp491, and Asp493 together coordinate Mg(2+).

The protein belongs to the RNA polymerase beta' chain family. RpoC1 subfamily. As to quaternary structure, in plastids the minimal PEP RNA polymerase catalytic core is composed of four subunits: alpha, beta, beta', and beta''. When a (nuclear-encoded) sigma factor is associated with the core the holoenzyme is formed, which can initiate transcription. The cofactor is Mg(2+). Requires Zn(2+) as cofactor.

It is found in the plastid. It localises to the chloroplast. The catalysed reaction is RNA(n) + a ribonucleoside 5'-triphosphate = RNA(n+1) + diphosphate. Functionally, DNA-dependent RNA polymerase catalyzes the transcription of DNA into RNA using the four ribonucleoside triphosphates as substrates. The polypeptide is DNA-directed RNA polymerase subunit beta' (Capsella bursa-pastoris (Shepherd's purse)).